Reading from the N-terminus, the 338-residue chain is Activator of 90 kDa heat shock protein ATPase homolog 1 (338 aa).

Residue Lys3 is modified to N6-acetyllysine. Residue Lys182 forms a Glycyl lysine isopeptide (Lys-Gly) (interchain with G-Cter in SUMO1) linkage. Residue Ser193 is modified to Phosphoserine. A Glycyl lysine isopeptide (Lys-Gly) (interchain with G-Cter in SUMO2) cross-link involves residue Lys203. N6-acetyllysine is present on Lys212. Tyr223 carries the post-translational modification Phosphotyrosine; by ABL.

Belongs to the AHA1 family. As to quaternary structure, interacts with HSPCA/HSP90. Interacts with HSP90AA1; the interaction activates HSP90AA1 ATPase activity. Interacts with HSP90AB1. Interacts with GCH1. Interacts with SRPK1. Interacts with FLCN. In terms of processing, phosphorylation at Tyr-223 enhances binding to chaperone HSP90AA1.

It localises to the cytoplasm. The protein resides in the cytosol. It is found in the endoplasmic reticulum. In terms of biological role, acts as a co-chaperone of HSP90AA1. Activates the ATPase activity of HSP90AA1 leading to increase in its chaperone activity. Competes with the inhibitory co-chaperone FNIP1 for binding to HSP90AA1, thereby providing a reciprocal regulatory mechanism for chaperoning of client proteins. Competes with the inhibitory co-chaperone TSC1 for binding to HSP90AA1, thereby providing a reciprocal regulatory mechanism for chaperoning of client proteins. The sequence is that of Activator of 90 kDa heat shock protein ATPase homolog 1 (Ahsa1) from Mus musculus (Mouse).